We begin with the raw amino-acid sequence, 570 residues long: Glycine--tRNA ligase (570 aa).

Residues Arg99 and Glu165 each coordinate substrate. Residues 197–199 (RNE), 207–212 (LRLREF), 324–325 (EC), and 443–446 (GIDR) contribute to the ATP site. 212-216 (FTQAE) is a binding site for substrate. 439 to 443 (EPSFG) contributes to the substrate binding site.

The protein belongs to the class-II aminoacyl-tRNA synthetase family.

It localises to the cytoplasm. It carries out the reaction tRNA(Gly) + glycine + ATP = glycyl-tRNA(Gly) + AMP + diphosphate. In terms of biological role, catalyzes the attachment of glycine to tRNA(Gly). This is Glycine--tRNA ligase from Thermococcus gammatolerans (strain DSM 15229 / JCM 11827 / EJ3).